The primary structure comprises 393 residues: Lipid-A-disaccharide synthase (393 aa).

This sequence belongs to the LpxB family.

It carries out the reaction a lipid X + a UDP-2-N,3-O-bis[(3R)-3-hydroxyacyl]-alpha-D-glucosamine = a lipid A disaccharide + UDP + H(+). The protein operates within bacterial outer membrane biogenesis; LPS lipid A biosynthesis. Condensation of UDP-2,3-diacylglucosamine and 2,3-diacylglucosamine-1-phosphate to form lipid A disaccharide, a precursor of lipid A, a phosphorylated glycolipid that anchors the lipopolysaccharide to the outer membrane of the cell. In Actinobacillus pleuropneumoniae serotype 5b (strain L20), this protein is Lipid-A-disaccharide synthase.